Reading from the N-terminus, the 176-residue chain is I-Kappa-B like protein G1 (176 aa).

ANK repeat units lie at residues 56 to 88, 93 to 123, and 127 to 156; these read EGRQ…DINS, FGNT…ELGA, and LYKT…VCDD.

The protein belongs to the polydnaviridae I-Kappa-B-like protein family.

Suppresses the host immune response through NF-kappa-B inactivation. Possesses ankyrin repeat domains required for NF-kappa-B binding but lacks the regulatory regions required for dissociation from NF-kappa-B and degradation. Therefore, prevents host NF-kappa-B release and subsequent activation. The polypeptide is I-Kappa-B like protein G1 (G3) (Microplitis demolitor (Parasitoid wasp)).